The chain runs to 92 residues: MALKIVESCVNCWACVDVCPSEAISLAGPHFEISASKCTECDGDYAEKQCASICPVEGAILLADGTPANPPGSLTGIPPERLAEAMREIQAR.

4Fe-4S ferredoxin-type domains follow at residues 2 to 28 and 29 to 65; these read ALKI…SLAG and PHFE…LADG. [4Fe-4S] cluster contacts are provided by Cys9, Cys12, Cys15, Cys19, Cys38, Cys41, Cys50, and Cys54.

The cofactor is [4Fe-4S] cluster.

In terms of biological role, ferredoxins are iron-sulfur proteins that transfer electrons in a wide variety of metabolic reactions. The protein is Ferredoxin-like protein in nif region of Azotobacter vinelandii.